The sequence spans 361 residues: Hsc70-interacting protein (361 aa).

Positions 39–98 are disordered; it reads GGTIPPAPASTSTDETSKGKAEEQPEEPVKSPEPESEESDLEIDNEGVIEPDNDDPQEMG. Residues 53 to 71 show a composition bias toward basic and acidic residues; that stretch reads ETSKGKAEEQPEEPVKSPE. The segment covering 72-98 has biased composition (acidic residues); that stretch reads PESEESDLEIDNEGVIEPDNDDPQEMG. TPR repeat units lie at residues 112–145, 147–179, and 181–213; these read ANEK…NPCL, ILYA…NPDS, and QTYK…DYDE. Basic and acidic residues predominate over residues 254–270; sequence KAREEHERAQREEEARR. The interval 254–292 is disordered; the sequence is KAREEHERAQREEEARRQAGGAQFGGFPGGFPGGFPGAM. Over residues 275 to 292 the composition is skewed to gly residues; sequence AQFGGFPGGFPGGFPGAM. Residues 311–350 form the STI1 domain; that stretch reads DPEVLAAMQDPEVMAAFQDVAQNPANMSKYQNNPKVMSLI.

Belongs to the FAM10 family. In terms of assembly, homotetramer. Interacts with HSC70 as well as DNAJ homologs and HSP90.

It localises to the cytoplasm. Functionally, one HIP oligomer binds the ATPase domains of at least two HSC70 molecules dependent on activation of the HSC70 ATPase by HSP40. Stabilizes the ADP state of HSC70 that has a high affinity for substrate protein. Through its own chaperone activity, it may contribute to the interaction of HSC70 with various target proteins. The sequence is that of Hsc70-interacting protein (ST13) from Gallus gallus (Chicken).